The chain runs to 283 residues: Short-chain dehydrogenase cctT (283 aa).

Positions 1–20 (MLKTVLITGCSHGGLGAAMA) are cleaved as a signal peptide. Positions 7, 33, 39, 55, and 83 each coordinate NADP(+). N131 carries N-linked (GlcNAc...) asparagine glycosylation. Residue S133 is the Proton donor of the active site. NADP(+) is bound by residues Y147, R151, V180, and T182. The Proton acceptor role is filled by Y147.

The protein belongs to the short-chain dehydrogenases/reductases (SDR) family.

Short-chain dehydrogenase; part of the gene cluster that mediates the biosynthesis of the mycotoxin cyclochlorotine, a hepatotoxic and carcinogenic cyclic chlorinated pentapeptide. The function of cctT within the pathway, if any, remains undetermined. The NRPS cctN initially catalyzes the condensation of L-serine (Ser), Pro, L-2-aminobutyrate (2Abu), Ser, and beta-Phe in this order to produce isocyclotine. After the dichlorination of Pro2 catalyzed by cctP2 to produce isocyclochlorotine, the cctO-mediated transacylation of isocyclochlorotine can furnish cyclochlorotine. The subsequent hydroxylation of cyclochlorotine by cctR yields hydroxycyclochlorotine as the final product. CctP1 probably acts as a phenylalanine aminomutase and provides the uncommon building block beta-Phe. Furthermore, 2Abu can be synthesized from threonine by one of the threonine dehydratases and transaminases localized outside of the cluster. The functions of the remaining proteins encoded by the cluster, cctM and cctT, have not been identified yet. This Talaromyces islandicus (Penicillium islandicum) protein is Short-chain dehydrogenase cctT.